Consider the following 262-residue polypeptide: Acyl-[acyl-carrier-protein]--UDP-N-acetylglucosamine O-acyltransferase (262 aa).

Belongs to the transferase hexapeptide repeat family. LpxA subfamily. As to quaternary structure, homotrimer.

Its subcellular location is the cytoplasm. The enzyme catalyses a (3R)-hydroxyacyl-[ACP] + UDP-N-acetyl-alpha-D-glucosamine = a UDP-3-O-[(3R)-3-hydroxyacyl]-N-acetyl-alpha-D-glucosamine + holo-[ACP]. The protein operates within glycolipid biosynthesis; lipid IV(A) biosynthesis; lipid IV(A) from (3R)-3-hydroxytetradecanoyl-[acyl-carrier-protein] and UDP-N-acetyl-alpha-D-glucosamine: step 1/6. Its function is as follows. Involved in the biosynthesis of lipid A, a phosphorylated glycolipid that anchors the lipopolysaccharide to the outer membrane of the cell. This Burkholderia ambifaria (strain ATCC BAA-244 / DSM 16087 / CCUG 44356 / LMG 19182 / AMMD) (Burkholderia cepacia (strain AMMD)) protein is Acyl-[acyl-carrier-protein]--UDP-N-acetylglucosamine O-acyltransferase.